The chain runs to 200 residues: Holliday junction branch migration complex subunit RuvA (200 aa).

Residues 1–65 (MYEYIKGTLT…ETEHVLYGFS (65 aa)) are domain I. Residues 66 to 144 (SRAERECFRL…TLMPLYLEEP (79 aa)) form a domain II region. The tract at residues 145 to 149 (VVPSS) is flexible linker. A domain III region spans residues 150–200 (TANSSFKEGIGALMNLGFSRLAADRMMTEAVKELSEEASVAELLPIALRKS).

Belongs to the RuvA family. Homotetramer. Forms an RuvA(8)-RuvB(12)-Holliday junction (HJ) complex. HJ DNA is sandwiched between 2 RuvA tetramers; dsDNA enters through RuvA and exits via RuvB. An RuvB hexamer assembles on each DNA strand where it exits the tetramer. Each RuvB hexamer is contacted by two RuvA subunits (via domain III) on 2 adjacent RuvB subunits; this complex drives branch migration. In the full resolvosome a probable DNA-RuvA(4)-RuvB(12)-RuvC(2) complex forms which resolves the HJ.

Its subcellular location is the cytoplasm. Functionally, the RuvA-RuvB-RuvC complex processes Holliday junction (HJ) DNA during genetic recombination and DNA repair, while the RuvA-RuvB complex plays an important role in the rescue of blocked DNA replication forks via replication fork reversal (RFR). RuvA specifically binds to HJ cruciform DNA, conferring on it an open structure. The RuvB hexamer acts as an ATP-dependent pump, pulling dsDNA into and through the RuvAB complex. HJ branch migration allows RuvC to scan DNA until it finds its consensus sequence, where it cleaves and resolves the cruciform DNA. This chain is Holliday junction branch migration complex subunit RuvA, found in Chlamydia trachomatis serovar L2 (strain ATCC VR-902B / DSM 19102 / 434/Bu).